The chain runs to 1001 residues: Integrator complex subunit 7 (1001 aa).

Residues Asp980–Phe1001 form a disordered region. The segment covering Pro989 to Phe1001 has biased composition (polar residues).

It belongs to the Integrator subunit 7 family. As to quaternary structure, belongs to the multiprotein complex Integrator, at least composed of IntS1, IntS2, IntS3, IntS4, omd/IntS5, IntS6, defl/IntS7, IntS8, IntS9, IntS10, IntS11, IntS12, asun/IntS13, IntS14 and IntS15. The core complex associates with protein phosphatase 2A subunits mts/PP2A and Pp2A-29B, to form the Integrator-PP2A (INTAC) complex.

It localises to the nucleus. It is found in the cytoplasm. In terms of biological role, component of the integrator complex, a multiprotein complex that terminates RNA polymerase II (Pol II) transcription in the promoter-proximal region of genes. The integrator complex provides a quality checkpoint during transcription elongation by driving premature transcription termination of transcripts that are unfavorably configured for transcriptional elongation: the complex terminates transcription by (1) catalyzing dephosphorylation of the C-terminal domain (CTD) of Pol II subunit Polr2A/Rbp1 and Spt5, and (2) degrading the exiting nascent RNA transcript via endonuclease activity. The integrator complex is also involved in the 3'-end processing of the U7 snRNA, and also the spliceosomal snRNAs U1, U2, U4 and U5. This Drosophila melanogaster (Fruit fly) protein is Integrator complex subunit 7.